The primary structure comprises 157 residues: Peptide methionine sulfoxide reductase MsrA (157 aa).

Cys-10 is a catalytic residue.

It belongs to the MsrA Met sulfoxide reductase family.

It carries out the reaction L-methionyl-[protein] + [thioredoxin]-disulfide + H2O = L-methionyl-(S)-S-oxide-[protein] + [thioredoxin]-dithiol. It catalyses the reaction [thioredoxin]-disulfide + L-methionine + H2O = L-methionine (S)-S-oxide + [thioredoxin]-dithiol. Functionally, has an important function as a repair enzyme for proteins that have been inactivated by oxidation. Catalyzes the reversible oxidation-reduction of methionine sulfoxide in proteins to methionine. The protein is Peptide methionine sulfoxide reductase MsrA of Clostridium botulinum (strain Kyoto / Type A2).